We begin with the raw amino-acid sequence, 833 residues long: Leucine--tRNA ligase (833 aa).

Positions 41 to 52 (PYPSGAGLHVGH) match the 'HIGH' region motif. Residues 610–614 (KMSKS) carry the 'KMSKS' region motif. Residue K613 coordinates ATP.

It belongs to the class-I aminoacyl-tRNA synthetase family.

It is found in the cytoplasm. It carries out the reaction tRNA(Leu) + L-leucine + ATP = L-leucyl-tRNA(Leu) + AMP + diphosphate. The chain is Leucine--tRNA ligase from Streptococcus pyogenes serotype M28 (strain MGAS6180).